Here is a 115-residue protein sequence, read N- to C-terminus: Meromycolate extension acyl carrier protein (115 aa).

A Carrier domain is found at 3-81 (VTQEEIIAGI…DVVAYIQKLE (79 aa)). An O-(pantetheine 4'-phosphoryl)serine modification is found at Ser41.

Belongs to the acyl carrier protein (ACP) family. In terms of processing, 4'-phosphopantetheine is transferred from CoA to a specific serine of apo-AcpM.

It is found in the cytoplasm. In terms of biological role, acyl carrier protein involved in meromycolate extension. The sequence is that of Meromycolate extension acyl carrier protein (acpM) from Mycobacterium bovis (strain ATCC BAA-935 / AF2122/97).